Consider the following 550-residue polypeptide: Arginine--tRNA ligase (550 aa).

A 'HIGH' region motif is present at residues 122–132 (GNPTGPLHLAH).

This sequence belongs to the class-I aminoacyl-tRNA synthetase family. Monomer.

The protein resides in the cytoplasm. It catalyses the reaction tRNA(Arg) + L-arginine + ATP = L-arginyl-tRNA(Arg) + AMP + diphosphate. The chain is Arginine--tRNA ligase from Tropheryma whipplei (strain TW08/27) (Whipple's bacillus).